We begin with the raw amino-acid sequence, 239 residues long: 1-(5-phosphoribosyl)-5-[(5-phosphoribosylamino)methylideneamino] imidazole-4-carboxamide isomerase (239 aa).

Residue aspartate 7 is the Proton acceptor of the active site. Aspartate 129 acts as the Proton donor in catalysis.

It belongs to the HisA/HisF family.

It is found in the cytoplasm. It catalyses the reaction 1-(5-phospho-beta-D-ribosyl)-5-[(5-phospho-beta-D-ribosylamino)methylideneamino]imidazole-4-carboxamide = 5-[(5-phospho-1-deoxy-D-ribulos-1-ylimino)methylamino]-1-(5-phospho-beta-D-ribosyl)imidazole-4-carboxamide. Its pathway is amino-acid biosynthesis; L-histidine biosynthesis; L-histidine from 5-phospho-alpha-D-ribose 1-diphosphate: step 4/9. This chain is 1-(5-phosphoribosyl)-5-[(5-phosphoribosylamino)methylideneamino] imidazole-4-carboxamide isomerase, found in Lactiplantibacillus plantarum (strain ATCC BAA-793 / NCIMB 8826 / WCFS1) (Lactobacillus plantarum).